Consider the following 291-residue polypeptide: Halorhodopsin (291 aa).

At 1 to 30 the chain is on the extracellular side; the sequence is MTETLPPVTESAVALQAEVTQRELFEFVLN. A helical membrane pass occupies residues 31–56; sequence DPLLASSLYINIALAGLSILLFVFMT. The Cytoplasmic segment spans residues 57 to 62; that stretch reads RGLDDP. A helical membrane pass occupies residues 63–86; that stretch reads RAKLIAVSTILVPVVSIASYTGLA. At 87–120 the chain is on the extracellular side; it reads SGLTISVLEMPAGHFAEGSSVMLGGEEVDGVVTM. A helical membrane pass occupies residues 121–142; the sequence is WGRYLTWALSTPMILLALGLLA. The Cytoplasmic segment spans residues 143 to 145; that stretch reads GSN. The chain crosses the membrane as a helical span at residues 146 to 169; the sequence is ATKLFTAITFDIAMCVTGLAAALT. Over 170–172 the chain is Extracellular; sequence TSS. Residues 173–195 form a helical membrane-spanning segment; the sequence is HLMRWFWYAISCACFLVVLYILL. The Cytoplasmic segment spans residues 196–207; sequence VEWAQDAKAAGT. Residues 208-231 form a helical membrane-spanning segment; sequence ADMFNTLKLLTVVMWLGYPIVWAL. Residues 232–240 are Extracellular-facing; it reads GVEGIAVLP. The chain crosses the membrane as a helical span at residues 241–269; the sequence is VGVTSWGYSFLDIVAKYIFAFLLLNYLTS. Lysine 256 bears the N6-(retinylidene)lysine mark. At 270 to 291 the chain is on the cytoplasmic side; sequence NESVVSGSILDVPSASGTPADD.

The protein belongs to the archaeal/bacterial/fungal opsin family.

The protein localises to the cell membrane. In terms of biological role, light-driven anion pump. Binding affinity for the anions is in the order, bromide &gt; chloride &gt; nitrate &gt; azide &gt; bromate and binding is pH dependent. The protein is Halorhodopsin (hop) of Natronomonas pharaonis (Natronobacterium pharaonis).